The primary structure comprises 395 residues: S-adenosylmethionine synthase (395 aa).

Position 14 (H14) interacts with ATP. Position 16 (D16) interacts with Mg(2+). E42 is a K(+) binding site. L-methionine-binding residues include E55 and Q98. Residues 98–108 (QSPDIALGVDK) are flexible loop. ATP contacts are provided by residues 174–176 (DGK), 240–241 (RF), D249, 255–256 (RK), A272, and K276. D249 contributes to the L-methionine binding site. K280 lines the L-methionine pocket.

This sequence belongs to the AdoMet synthase family. In terms of assembly, homotetramer; dimer of dimers. It depends on Mg(2+) as a cofactor. The cofactor is K(+).

Its subcellular location is the cytoplasm. It catalyses the reaction L-methionine + ATP + H2O = S-adenosyl-L-methionine + phosphate + diphosphate. Its pathway is amino-acid biosynthesis; S-adenosyl-L-methionine biosynthesis; S-adenosyl-L-methionine from L-methionine: step 1/1. Catalyzes the formation of S-adenosylmethionine (AdoMet) from methionine and ATP. The overall synthetic reaction is composed of two sequential steps, AdoMet formation and the subsequent tripolyphosphate hydrolysis which occurs prior to release of AdoMet from the enzyme. The sequence is that of S-adenosylmethionine synthase from Thermotoga neapolitana (strain ATCC 49049 / DSM 4359 / NBRC 107923 / NS-E).